Consider the following 138-residue polypeptide: ATP synthase epsilon chain (138 aa).

This sequence belongs to the ATPase epsilon chain family. In terms of assembly, F-type ATPases have 2 components, CF(1) - the catalytic core - and CF(0) - the membrane proton channel. CF(1) has five subunits: alpha(3), beta(3), gamma(1), delta(1), epsilon(1). CF(0) has three main subunits: a, b and c.

It localises to the cell membrane. Functionally, produces ATP from ADP in the presence of a proton gradient across the membrane. In Streptococcus pyogenes serotype M2 (strain MGAS10270), this protein is ATP synthase epsilon chain.